We begin with the raw amino-acid sequence, 371 residues long: MSTQKPLIALAAGGTGGHVFPAEALASVLLDRGYRLALITDKRGAAYGGTLGKLETFRISAGGIAGRGKLSALRSALELGLGLIQARSILGRIRPAAVIGFGGYASVPGMGAAALAGIPTAIHEQNAVLGRANRLLAGHVRRIATSFAEVSHVEPKLAPKLVHTGMPVRAAILASRDASYAGITAEGPIELLVLGGSQGARILSEVIPAALARLPEALRTRIRIAQQCRPEDLEGVRRAYDGTGIDATLDSFFADVPERLARAHLVIARAGASTVAELTTLGRPAILVPYPFAVDDHQTANAHAAEDCGGAWLMQQDSFTADSLAARLDSLFTHPEALVRTAVCARNVGRPDAAEALADLVVGLIPNESGA.

UDP-N-acetyl-alpha-D-glucosamine is bound by residues 15-17, Asn-126, Arg-169, Ser-197, and Gln-298; that span reads TGG.

The protein belongs to the glycosyltransferase 28 family. MurG subfamily.

The protein localises to the cell inner membrane. The catalysed reaction is di-trans,octa-cis-undecaprenyl diphospho-N-acetyl-alpha-D-muramoyl-L-alanyl-D-glutamyl-meso-2,6-diaminopimeloyl-D-alanyl-D-alanine + UDP-N-acetyl-alpha-D-glucosamine = di-trans,octa-cis-undecaprenyl diphospho-[N-acetyl-alpha-D-glucosaminyl-(1-&gt;4)]-N-acetyl-alpha-D-muramoyl-L-alanyl-D-glutamyl-meso-2,6-diaminopimeloyl-D-alanyl-D-alanine + UDP + H(+). It participates in cell wall biogenesis; peptidoglycan biosynthesis. Cell wall formation. Catalyzes the transfer of a GlcNAc subunit on undecaprenyl-pyrophosphoryl-MurNAc-pentapeptide (lipid intermediate I) to form undecaprenyl-pyrophosphoryl-MurNAc-(pentapeptide)GlcNAc (lipid intermediate II). In Paramagnetospirillum magneticum (strain ATCC 700264 / AMB-1) (Magnetospirillum magneticum), this protein is UDP-N-acetylglucosamine--N-acetylmuramyl-(pentapeptide) pyrophosphoryl-undecaprenol N-acetylglucosamine transferase.